The following is a 473-amino-acid chain: Probable cytosolic iron-sulfur protein assembly protein 1 (473 aa).

The segment at 1-25 (MPSSTPGGSLKHLSDLTPPSQDRTW) is disordered. WD repeat units lie at residues 11 to 58 (KHLS…LLST) and 62 to 104 (GHKR…GRAE). Residues 112-133 (GGLAEADRQEGDDTDGDEEDED) form a disordered region. The span at 123-133 (DDTDGDEEDED) shows a compositional bias: acidic residues. 4 WD repeats span residues 144–183 (GHDS…DNNF), 191–230 (EHSG…WGQV), 235–313 (GHEG…KPPP), and 341–380 (MHDL…KPPV). A disordered region spans residues 377-405 (KPPVHTTSEQDKPDSARETQKANGERTAP). The segment covering 384–400 (SEQDKPDSARETQKANG) has biased composition (basic and acidic residues). The stretch at 438-473 (SQQQNFDNSEMDHANEEEVLLSTGDDGVVRVWTLER) is one WD 7 repeat.

The protein belongs to the WD repeat CIA1 family.

Functionally, essential component of the cytosolic iron-sulfur (Fe/S) protein assembly machinery. Required for the maturation of extramitochondrial Fe/S proteins. In Coccidioides immitis (strain RS) (Valley fever fungus), this protein is Probable cytosolic iron-sulfur protein assembly protein 1.